The following is a 151-amino-acid chain: Deazaflavin-dependent nitroreductase (151 aa).

Residues 54–56, 60–65, 76–79, 87–91, and Y133 each bind coenzyme F420-(gamma-Glu)n; these read RKT, RVNPLY, AASK, and MWYLN.

Belongs to the F420H(2)-dependent quinone reductase family.

The protein localises to the cell membrane. It carries out the reaction oxidized coenzyme F420-(gamma-L-Glu)(n) + a quinol + H(+) = reduced coenzyme F420-(gamma-L-Glu)(n) + a quinone. Functionally, involved in a F420-dependent anti-oxidant mechanism that protects M.tuberculosis against oxidative stress and bactericidal agents. Catalyzes the F420H(2)-dependent two-electron reduction of quinones to dihydroquinones, thereby preventing the formation of cytotoxic semiquinones obtained by the one-electron reduction pathway. In vitro, catalyzes the reduction of both benzoquinone and naphthoquinone analogs; since menaquinone is the sole quinone electron carrier in the respiratory chain in M.tuberculosis, the physiological electron acceptor for Fqr-mediated F420H(2) oxidation is therefore likely to be the endogenous menaquinone found in the membrane fraction of M.tuberculosis. Is able to use F420 species with two and five glutamate residues in its polyglutamate tail. Cannot use NADH or NADPH instead of F420H(2) as the electron donor. In terms of biological role, is involved in the bioreductive activation of bicyclic 4-nitroimidazole prodrugs such as PA-824 and delamanid developed for anti-tuberculosis therapy against both replicating and persistent bacteria. It converts PA-824 into three primary metabolites resulting from reduction of the imidazole ring at C-3; the major one is the corresponding des-nitroimidazole that generates lethal reactive nitrogen species, including nitric oxide (NO), which appears to be responsible for the anaerobic killing activity. Ddn uses the reduced F420 produced by FGD1 to activate PA-824. Delamanid (OPC-67683) is also reduced by Ddn to its des-nitro form. In Mycobacterium tuberculosis (strain CDC 1551 / Oshkosh), this protein is Deazaflavin-dependent nitroreductase (ddn).